The primary structure comprises 280 residues: 4-diphosphocytidyl-2-C-methyl-D-erythritol kinase (280 aa).

The active site involves lysine 8. Residue 91-101 coordinates ATP; that stretch reads PVSAGLAGGST. The active site involves aspartate 133.

This sequence belongs to the GHMP kinase family. IspE subfamily.

It carries out the reaction 4-CDP-2-C-methyl-D-erythritol + ATP = 4-CDP-2-C-methyl-D-erythritol 2-phosphate + ADP + H(+). It participates in isoprenoid biosynthesis; isopentenyl diphosphate biosynthesis via DXP pathway; isopentenyl diphosphate from 1-deoxy-D-xylulose 5-phosphate: step 3/6. In terms of biological role, catalyzes the phosphorylation of the position 2 hydroxy group of 4-diphosphocytidyl-2C-methyl-D-erythritol. This is 4-diphosphocytidyl-2-C-methyl-D-erythritol kinase from Clostridium botulinum (strain Eklund 17B / Type B).